We begin with the raw amino-acid sequence, 266 residues long: Glucosamine-6-phosphate deaminase (266 aa).

The active-site Proton acceptor; for enolization step is Asp-72. The For ring-opening step role is filled by Asp-141. Residue His-143 is the Proton acceptor; for ring-opening step of the active site. The For ring-opening step role is filled by Glu-148.

The protein belongs to the glucosamine/galactosamine-6-phosphate isomerase family. NagB subfamily. In terms of assembly, homohexamer.

It catalyses the reaction alpha-D-glucosamine 6-phosphate + H2O = beta-D-fructose 6-phosphate + NH4(+). It participates in amino-sugar metabolism; N-acetylneuraminate degradation; D-fructose 6-phosphate from N-acetylneuraminate: step 5/5. Allosterically activated by N-acetylglucosamine 6-phosphate (GlcNAc6P). Its function is as follows. Catalyzes the reversible isomerization-deamination of glucosamine 6-phosphate (GlcN6P) to form fructose 6-phosphate (Fru6P) and ammonium ion. The protein is Glucosamine-6-phosphate deaminase of Serratia proteamaculans (strain 568).